Reading from the N-terminus, the 209-residue chain is Large ribosomal subunit protein uL4 (209 aa).

The interval 50 to 89 (MTKTKGLVSGGGKKPFKQKGTGGARQGSSRSILMPGGGTA) is disordered.

Belongs to the universal ribosomal protein uL4 family. In terms of assembly, part of the 50S ribosomal subunit.

Its function is as follows. One of the primary rRNA binding proteins, this protein initially binds near the 5'-end of the 23S rRNA. It is important during the early stages of 50S assembly. It makes multiple contacts with different domains of the 23S rRNA in the assembled 50S subunit and ribosome. Functionally, forms part of the polypeptide exit tunnel. The chain is Large ribosomal subunit protein uL4 from Bdellovibrio bacteriovorus (strain ATCC 15356 / DSM 50701 / NCIMB 9529 / HD100).